We begin with the raw amino-acid sequence, 601 residues long: COP9 signalosome complex subunit 1 (601 aa).

Acidic residues predominate over residues 1–10; the sequence is MQNELLDDPM. Disordered stretches follow at residues 1-54 and 268-294; these read MQNE…LDNP and DADDAEKNSQQSQQAPPQRGENAPYMV. Residues 14-24 are compositionally biased toward low complexity; the sequence is APAAEAAAADE. A PCI domain is found at 338–500; the sequence is TILQIKTECL…GIVRILDERD (163 aa). Residues 535–581 form a disordered region; sequence SISDKETRPKRKNQKESAKFDRNFGGIDVDEDPRGIAGPSGLSDDFN.

It belongs to the CSN1 family. As to quaternary structure, component of the CSN complex, probably composed of csn-1, csn-2, csn-3, csn-4, csn-5, csn-6 and csn-7. Within the complex it probably interacts directly with csn-2, csn-4 and csn-5. May interact with itself. Interacts with rbx-1.

Its subcellular location is the cytoplasm. The protein localises to the nucleus. In terms of biological role, essential component of the COP9 signalosome complex (CSN), a complex involved in various cellular and developmental processes. The CSN complex is an essential regulator of the ubiquitin (Ubl) conjugation pathway by mediating the deneddylation of the cullin subunits of the SCF-type E3 ligase complexes, leading to decrease the Ubl ligase activity of SCF. The CSN complex plays an essential role in embryogenesis and oogenesis and is required to regulate microtubule stability in the early embryo. Mediates mei-3/katanin targeting for degradation at the meiosis to mitosis transition via deneddylation of cul-3. This is COP9 signalosome complex subunit 1 (csn-1) from Caenorhabditis elegans.